The primary structure comprises 492 residues: Bifunctional purine biosynthesis protein PurH (492 aa).

The MGS-like domain maps to 1-144; it reads MKKAILSVSN…KNYKHVTTIV (144 aa).

The protein belongs to the PurH family.

It carries out the reaction (6R)-10-formyltetrahydrofolate + 5-amino-1-(5-phospho-beta-D-ribosyl)imidazole-4-carboxamide = 5-formamido-1-(5-phospho-D-ribosyl)imidazole-4-carboxamide + (6S)-5,6,7,8-tetrahydrofolate. The enzyme catalyses IMP + H2O = 5-formamido-1-(5-phospho-D-ribosyl)imidazole-4-carboxamide. It functions in the pathway purine metabolism; IMP biosynthesis via de novo pathway; 5-formamido-1-(5-phospho-D-ribosyl)imidazole-4-carboxamide from 5-amino-1-(5-phospho-D-ribosyl)imidazole-4-carboxamide (10-formyl THF route): step 1/1. The protein operates within purine metabolism; IMP biosynthesis via de novo pathway; IMP from 5-formamido-1-(5-phospho-D-ribosyl)imidazole-4-carboxamide: step 1/1. The protein is Bifunctional purine biosynthesis protein PurH of Staphylococcus aureus (strain MSSA476).